Here is a 494-residue protein sequence, read N- to C-terminus: Tripartite motif-containing protein 5 (494 aa).

A2 bears the N-acetylalanine mark. An RING-type zinc finger spans residues 15 to 59 (CPICLELLTEPLSLDCGHSFCQACITANHKKSMLHQGERSCPLCR). S86 is modified (phosphoserine). The B box-type zinc-finger motif lies at 91–132 (QKVDHCARHGEKLLLFCQQDGNVICWLCERSQEHRGHHTLLV). 4 residues coordinate Zn(2+): C96, H99, C118, and H124. Residues 132 to 222 (VEEVAQTYRE…KRLTQSENDM (91 aa)) adopt a coiled-coil conformation. The tract at residues 186-199 (FKQLRDILDCEESN) is required for interaction with GABARAP and for autophagy. Positions 280 to 494 (PDLKGMLQVF…LPMTLCSPRS (215 aa)) constitute a B30.2/SPRY domain.

The protein belongs to the TRIM/RBCC family. Can form homodimers and homotrimers. In addition to lower-order dimerization, also exhibits a higher-order multimerization and both low- and high-order multimerizations are essential for its restriction activity. Interacts with BTBD1 and BTBD2. Interacts with PSMC4, PSMC5, PSMD7 and HSPA8/HSC70. Interacts (via B30.2/SPRY domain) with HSPA1A/B. Interacts with PSMC2, MAP3K7/TAK1, TAB2 and TAB3. Interacts with SQSTM1. Interacts with TRIM6 and TRIM34. Interacts with ULK1 (phosphorylated form), GABARAP, GABARAPL1, GABARAPL2, MAP1LC3A, MAP1LC3C and BECN1. Post-translationally, degraded in a proteasome-independent fashion in the absence of viral infection but in a proteasome-dependent fashion following exposure to restriction sensitive virus. In terms of processing, autoubiquitinated in a RING finger- and UBE2D2-dependent manner. Monoubiquitinated by TRIM21. Deubiquitinated by Yersinia YopJ. Ubiquitination may not lead to proteasomal degradation.

The protein localises to the cytoplasm. It is found in the nucleus. The enzyme catalyses S-ubiquitinyl-[E2 ubiquitin-conjugating enzyme]-L-cysteine + [acceptor protein]-L-lysine = [E2 ubiquitin-conjugating enzyme]-L-cysteine + N(6)-ubiquitinyl-[acceptor protein]-L-lysine.. It participates in protein modification; protein ubiquitination. Functionally, capsid-specific restriction factor that prevents infection from non-host-adapted retroviruses. Blocks viral replication early in the life cycle, after viral entry but before reverse transcription. In addition to acting as a capsid-specific restriction factor, also acts as a pattern recognition receptor that activates innate immune signaling in response to the retroviral capsid lattice. Binding to the viral capsid triggers its E3 ubiquitin ligase activity, and in concert with the heterodimeric ubiquitin conjugating enzyme complex UBE2V1-UBE2N (also known as UBC13-UEV1A complex) generates 'Lys-63'-linked polyubiquitin chains, which in turn are catalysts in the autophosphorylation of the MAP3K7/TAK1 complex (includes TAK1, TAB2, and TAB3). Activation of the MAP3K7/TAK1 complex by autophosphorylation results in the induction and expression of NF-kappa-B and MAPK-responsive inflammatory genes, thereby leading to an innate immune response in the infected cell. Plays a role in regulating autophagy through activation of autophagy regulator BECN1 by causing its dissociation from its inhibitors BCL2 and TAB2. The protein is Tripartite motif-containing protein 5 (TRIM5) of Pithecia pithecia (White-faced saki).